The primary structure comprises 297 residues: HTH-type transcriptional regulator PerR (297 aa).

The region spanning 7-64 is the HTH lysR-type domain; that stretch reads APLNLLRAFEAAGRTGAFALAASELELSPSAISHAIRKLENLLDVRLFQRSTREITLT. Positions 24–44 form a DNA-binding region, H-T-H motif; it reads FALAASELELSPSAISHAIRK.

The protein belongs to the LysR transcriptional regulatory family.

Apparent regulatory gene involved in peroxide resistance in stationary phase. This is HTH-type transcriptional regulator PerR (perR) from Escherichia coli (strain K12).